The primary structure comprises 456 residues: Bifunctional protein GlmU (456 aa).

The tract at residues Met-1 to Arg-229 is pyrophosphorylase. UDP-N-acetyl-alpha-D-glucosamine-binding positions include Leu-11–Gly-14, Lys-25, Gln-76, Gly-81–Thr-82, Tyr-103–Asp-105, Gly-140, Glu-154, Asn-169, and Asn-227. Asp-105 contributes to the Mg(2+) binding site. Asn-227 is a binding site for Mg(2+). Residues Leu-230–Ala-250 are linker. The interval Gly-251–Lys-456 is N-acetyltransferase. The UDP-N-acetyl-alpha-D-glucosamine site is built by Arg-333 and Lys-351. Catalysis depends on His-363, which acts as the Proton acceptor. UDP-N-acetyl-alpha-D-glucosamine-binding residues include Tyr-366 and Asn-377. Acetyl-CoA is bound by residues Ala-380, Asn-386–Tyr-387, Ser-405, Ala-423, and Arg-440.

The protein in the N-terminal section; belongs to the N-acetylglucosamine-1-phosphate uridyltransferase family. In the C-terminal section; belongs to the transferase hexapeptide repeat family. Homotrimer. Mg(2+) is required as a cofactor.

It localises to the cytoplasm. It catalyses the reaction alpha-D-glucosamine 1-phosphate + acetyl-CoA = N-acetyl-alpha-D-glucosamine 1-phosphate + CoA + H(+). The enzyme catalyses N-acetyl-alpha-D-glucosamine 1-phosphate + UTP + H(+) = UDP-N-acetyl-alpha-D-glucosamine + diphosphate. The protein operates within nucleotide-sugar biosynthesis; UDP-N-acetyl-alpha-D-glucosamine biosynthesis; N-acetyl-alpha-D-glucosamine 1-phosphate from alpha-D-glucosamine 6-phosphate (route II): step 2/2. It participates in nucleotide-sugar biosynthesis; UDP-N-acetyl-alpha-D-glucosamine biosynthesis; UDP-N-acetyl-alpha-D-glucosamine from N-acetyl-alpha-D-glucosamine 1-phosphate: step 1/1. It functions in the pathway bacterial outer membrane biogenesis; LPS lipid A biosynthesis. In terms of biological role, catalyzes the last two sequential reactions in the de novo biosynthetic pathway for UDP-N-acetylglucosamine (UDP-GlcNAc). The C-terminal domain catalyzes the transfer of acetyl group from acetyl coenzyme A to glucosamine-1-phosphate (GlcN-1-P) to produce N-acetylglucosamine-1-phosphate (GlcNAc-1-P), which is converted into UDP-GlcNAc by the transfer of uridine 5-monophosphate (from uridine 5-triphosphate), a reaction catalyzed by the N-terminal domain. This is Bifunctional protein GlmU from Escherichia coli O6:K15:H31 (strain 536 / UPEC).